The sequence spans 311 residues: Methionyl-tRNA formyltransferase (311 aa).

112–115 (SLLP) serves as a coordination point for (6S)-5,6,7,8-tetrahydrofolate.

This sequence belongs to the Fmt family.

The catalysed reaction is L-methionyl-tRNA(fMet) + (6R)-10-formyltetrahydrofolate = N-formyl-L-methionyl-tRNA(fMet) + (6S)-5,6,7,8-tetrahydrofolate + H(+). In terms of biological role, attaches a formyl group to the free amino group of methionyl-tRNA(fMet). The formyl group appears to play a dual role in the initiator identity of N-formylmethionyl-tRNA by promoting its recognition by IF2 and preventing the misappropriation of this tRNA by the elongation apparatus. The polypeptide is Methionyl-tRNA formyltransferase (Rhizobium meliloti (strain 1021) (Ensifer meliloti)).